The chain runs to 104 residues: Large ribosomal subunit protein bL21 (104 aa).

The protein belongs to the bacterial ribosomal protein bL21 family. Part of the 50S ribosomal subunit. Contacts protein L20.

This protein binds to 23S rRNA in the presence of protein L20. The protein is Large ribosomal subunit protein bL21 of Francisella philomiragia subsp. philomiragia (strain ATCC 25017 / CCUG 19701 / FSC 153 / O#319-036).